A 583-amino-acid polypeptide reads, in one-letter code: Moesin/ezrin/radixin homolog 1 (583 aa).

The region spanning 11 to 301 is the FERM domain; it reads MNVRVTTMDA…GNHELYMRRR (291 aa). Disordered stretches follow at residues 466 to 518 and 539 to 558; these read TTTP…RTLA and RDDT…VRQG. Over residues 476 to 485 the composition is skewed to acidic residues; it reads EEEEDNEEEL. The span at 496 to 518 shows a compositional bias: basic and acidic residues; it reads DYSKDFDTDEHIKDPVEERRTLA. T564 bears the Phosphothreonine mark.

In terms of assembly, interacts with cytoskeletal actin.

It is found in the cell junction. Its subcellular location is the adherens junction. The protein localises to the cell projection. It localises to the microvillus. The protein resides in the rhabdomere. It is found in the cell membrane. Its subcellular location is the cytoplasm. The protein localises to the cytoskeleton. Functionally, involved in connections of major cytoskeletal structures to the plasma membrane. In Aedes aegypti (Yellowfever mosquito), this protein is Moesin/ezrin/radixin homolog 1.